Reading from the N-terminus, the 501-residue chain is Bifunctional purine biosynthesis protein PurH (501 aa).

Residues 1–144 (MKKRALISVF…KNFKDVVVLS (144 aa)) enclose the MGS-like domain.

The protein belongs to the PurH family.

It carries out the reaction (6R)-10-formyltetrahydrofolate + 5-amino-1-(5-phospho-beta-D-ribosyl)imidazole-4-carboxamide = 5-formamido-1-(5-phospho-D-ribosyl)imidazole-4-carboxamide + (6S)-5,6,7,8-tetrahydrofolate. The catalysed reaction is IMP + H2O = 5-formamido-1-(5-phospho-D-ribosyl)imidazole-4-carboxamide. It participates in purine metabolism; IMP biosynthesis via de novo pathway; 5-formamido-1-(5-phospho-D-ribosyl)imidazole-4-carboxamide from 5-amino-1-(5-phospho-D-ribosyl)imidazole-4-carboxamide (10-formyl THF route): step 1/1. The protein operates within purine metabolism; IMP biosynthesis via de novo pathway; IMP from 5-formamido-1-(5-phospho-D-ribosyl)imidazole-4-carboxamide: step 1/1. This chain is Bifunctional purine biosynthesis protein PurH, found in Clostridium perfringens (strain SM101 / Type A).